Here is a 790-residue protein sequence, read N- to C-terminus: Nuclear cap-binding protein subunit 1 (790 aa).

Residues 1–26 (MSRRRHSYENDGGQPHKRRKTSDANE) form a disordered region. The short motif at 3-20 (RRRHSYENDGGQPHKRRK) is the Nuclear localization signal element. Ser7 carries the post-translational modification Phosphoserine. A Phosphothreonine modification is found at Thr21. Phosphoserine occurs at positions 22 and 201. An MIF4G domain is found at 28–240 (EDHLESLICK…CLWAQIQKLK (213 aa)). Lys204 carries the N6-acetyllysine modification. Residues 643–713 (STIRKMNKHV…SEQKNLFLVI (71 aa)) are a coiled coil. Residue Lys684 forms a Glycyl lysine isopeptide (Lys-Gly) (interchain with G-Cter in SUMO2) linkage. Lys698 carries the post-translational modification N6-acetyllysine.

This sequence belongs to the NCBP1 family. In terms of assembly, component of the nuclear cap-binding complex (CBC), a heterodimer composed of NCBP1/CBP80 and NCBP2/CBP20 that interacts with m7GpppG-capped RNA. Found in a U snRNA export complex containing PHAX/RNUXA, NCBP1/CBP80, NCBP2/CBP20, RAN, XPO1 and m7G-capped RNA. Identified in a IGF2BP1-dependent mRNP granule complex containing untranslated mRNAs. Interacts with PHAX/RNUXA, SRRT/ARS2, EIF4G2, IGF2BP1, HNRNPF, HNRNPH1, KIAA0427/CTIF, PARN, DROSHA, UPF1 and ALYREF/THOC4. May interact with EIF4G1; the interaction is however controversial since it is reported by, and, but is not observed by. The large PER complex involved in the repression of transcriptional termination is composed of at least PER2, CDK9, DDX5, DHX9, NCBP1/CBP80 and POLR2A. Component of an alternative nuclear cap-binding complex (CBC) composed of NCBP1/CBP80 and NCBP3. Interacts with METTL3. Interacts with ZFC3H1 in a RNase-insensitive manner. Interacts with MTREX. Interacts with TASOR. Interacts with DHX34; the interaction is RNA-dependent. Interacts with KPNA3. Dephosphorylated at Thr-21 by the PNUTS-PP1 complex during RNA polymerase II transcription pause-release.

Its subcellular location is the nucleus. The protein resides in the cytoplasm. Functionally, component of the cap-binding complex (CBC), which binds cotranscriptionally to the 5'-cap of pre-mRNAs and is involved in various processes such as pre-mRNA splicing, translation regulation, nonsense-mediated mRNA decay, RNA-mediated gene silencing (RNAi) by microRNAs (miRNAs) and mRNA export. The CBC complex is involved in mRNA export from the nucleus via its interaction with ALYREF/THOC4/ALY, leading to the recruitment of the mRNA export machinery to the 5'-end of mRNA and to mRNA export in a 5' to 3' direction through the nuclear pore. The CBC complex is also involved in mediating U snRNA and intronless mRNAs export from the nucleus. The CBC complex is essential for a pioneer round of mRNA translation, before steady state translation when the CBC complex is replaced by cytoplasmic cap-binding protein eIF4E. The pioneer round of mRNA translation mediated by the CBC complex plays a central role in nonsense-mediated mRNA decay (NMD), NMD only taking place in mRNAs bound to the CBC complex, but not on eIF4E-bound mRNAs. The CBC complex enhances NMD in mRNAs containing at least one exon-junction complex (EJC) via its interaction with UPF1, promoting the interaction between UPF1 and UPF2. The CBC complex is also involved in 'failsafe' NMD, which is independent of the EJC complex, while it does not participate in Staufen-mediated mRNA decay (SMD). During cell proliferation, the CBC complex is also involved in microRNAs (miRNAs) biogenesis via its interaction with SRRT/ARS2 and is required for miRNA-mediated RNA interference. The CBC complex also acts as a negative regulator of PARN, thereby acting as an inhibitor of mRNA deadenylation. In the CBC complex, NCBP1/CBP80 does not bind directly capped RNAs (m7GpppG-capped RNA) but is required to stabilize the movement of the N-terminal loop of NCBP2/CBP20 and lock the CBC into a high affinity cap-binding state with the cap structure. Associates with NCBP3 to form an alternative cap-binding complex (CBC) which plays a key role in mRNA export and is particularly important in cellular stress situations such as virus infections. The conventional CBC with NCBP2 binds both small nuclear RNA (snRNA) and messenger (mRNA) and is involved in their export from the nucleus whereas the alternative CBC with NCBP3 does not bind snRNA and associates only with mRNA thereby playing a role only in mRNA export. NCBP1/CBP80 is required for cell growth and viability. The chain is Nuclear cap-binding protein subunit 1 (Ncbp1) from Rattus norvegicus (Rat).